A 97-amino-acid chain; its full sequence is Large ribosomal subunit protein bL27 (97 aa).

Residues 1 to 10 (MVKLNLSNLQ) are compositionally biased toward polar residues. Positions 1–12 (MVKLNLSNLQHF) are excised as a propeptide. The disordered stretch occupies residues 1–38 (MVKLNLSNLQHFAHKKGGGSTSNGRDSQAKRLGAKAAD).

It belongs to the bacterial ribosomal protein bL27 family. Post-translationally, the N-terminus is cleaved by ribosomal processing cysteine protease Prp.

In Streptococcus equi subsp. zooepidemicus (strain H70), this protein is Large ribosomal subunit protein bL27.